We begin with the raw amino-acid sequence, 182 residues long: NADH-quinone oxidoreductase subunit I (182 aa).

2 4Fe-4S ferredoxin-type domains span residues 52-82 (LTRDPDGEERCVACNLCAVACPVGCISLQKA) and 92-121 (DFFRINFSRCIFCGLCEEACPTTAIQLTPD). [4Fe-4S] cluster contacts are provided by cysteine 62, cysteine 65, cysteine 68, cysteine 72, cysteine 101, cysteine 104, cysteine 107, and cysteine 111.

The protein belongs to the complex I 23 kDa subunit family. NDH-1 is composed of 13 different subunits. Subunits NuoA, H, J, K, L, M, N constitute the membrane sector of the complex. It depends on [4Fe-4S] cluster as a cofactor.

The protein resides in the cell inner membrane. It catalyses the reaction a quinone + NADH + 5 H(+)(in) = a quinol + NAD(+) + 4 H(+)(out). In terms of biological role, NDH-1 shuttles electrons from NADH, via FMN and iron-sulfur (Fe-S) centers, to quinones in the respiratory chain. The immediate electron acceptor for the enzyme in this species is believed to be ubiquinone. Couples the redox reaction to proton translocation (for every two electrons transferred, four hydrogen ions are translocated across the cytoplasmic membrane), and thus conserves the redox energy in a proton gradient. This is NADH-quinone oxidoreductase subunit I from Pseudomonas syringae pv. tomato (strain ATCC BAA-871 / DC3000).